The chain runs to 151 residues: Small ribosomal subunit protein uS15 (151 aa).

The protein belongs to the universal ribosomal protein uS15 family.

The sequence is that of Small ribosomal subunit protein uS15 (RPS13) from Candida maltosa (Yeast).